Here is a 219-residue protein sequence, read N- to C-terminus: 7-cyano-7-deazaguanine synthase (219 aa).

An ATP-binding site is contributed by 10-20 (FSGGQDSTTCL). Cys188, Cys197, Cys200, and Cys203 together coordinate Zn(2+).

The protein belongs to the QueC family. In terms of assembly, homodimer. Zn(2+) is required as a cofactor.

It catalyses the reaction 7-carboxy-7-deazaguanine + NH4(+) + ATP = 7-cyano-7-deazaguanine + ADP + phosphate + H2O + H(+). The protein operates within purine metabolism; 7-cyano-7-deazaguanine biosynthesis. Functionally, catalyzes the ATP-dependent conversion of 7-carboxy-7-deazaguanine (CDG) to 7-cyano-7-deazaguanine (preQ(0)). This chain is 7-cyano-7-deazaguanine synthase, found in Clostridium botulinum (strain ATCC 19397 / Type A).